A 301-amino-acid polypeptide reads, in one-letter code: Protein FdhE homolog (301 aa).

Belongs to the FdhE family.

It localises to the cytoplasm. In terms of biological role, necessary for formate dehydrogenase activity. The protein is Protein FdhE homolog of Shewanella baltica (strain OS195).